A 362-amino-acid polypeptide reads, in one-letter code: 3-dehydroquinate synthase (362 aa).

NAD(+) is bound by residues 72–77 (SGEEAK), 106–110 (GVTGD), 130–131 (TT), Lys-142, and Lys-151. Zn(2+) contacts are provided by Glu-184, His-246, and His-263.

Belongs to the sugar phosphate cyclases superfamily. Dehydroquinate synthase family. Co(2+) is required as a cofactor. It depends on Zn(2+) as a cofactor. NAD(+) serves as cofactor.

The protein resides in the cytoplasm. It catalyses the reaction 7-phospho-2-dehydro-3-deoxy-D-arabino-heptonate = 3-dehydroquinate + phosphate. It participates in metabolic intermediate biosynthesis; chorismate biosynthesis; chorismate from D-erythrose 4-phosphate and phosphoenolpyruvate: step 2/7. In terms of biological role, catalyzes the conversion of 3-deoxy-D-arabino-heptulosonate 7-phosphate (DAHP) to dehydroquinate (DHQ). In Bacillus velezensis (strain DSM 23117 / BGSC 10A6 / LMG 26770 / FZB42) (Bacillus amyloliquefaciens subsp. plantarum), this protein is 3-dehydroquinate synthase.